The primary structure comprises 1089 residues: MEPAEEPGQISKDNFLEVPNLSDSVCEDEEVKATFKPGFSPQPSRRGSGSSEDMYLDTPTSASRRVSFADSLGFSLVSVKEFDCWELPSVSTDFDLSGDVFHTDEYVLSPLFDLPSSKEKLMEQLQVQKAVLESAEHLPGSSMKGIIRVLNISFEKLVYVRMSLDDWQTHYDILAEYVPNSCDGETDQFSFKISLVPPYQKEGGKVEFCIRYETSAGTFWSNNNGTNYILVCQKKRKEPEPVKPLEEAPSRQIKGCLKVKSRSKEEPLLAPEENKFETLKFTESYIPTIICSHEDKDDLGANHPNVDDINKKHDEHNGKELDLMINQRLITSQDEKNTFATDTVNFTNKAEGSEKKQAYHEINTDLFMGPLSPSLSAESSLKRDFYHSRSSSPGNEYGHPHSEEIISDMGEKGPSLGDTSSDELMQLELCSKEDLDDNANPANGSGRVCSSFDQRMACGLKNNEAGIKKTGIQDYKYSHGDSTKLEESNASSRDDYAKVDNKKEKQTCLGVNENPSKNFQSVFQTQEGHMGYPKISTEGDKANNQDLTSLLSKDITANTWAVTVDPCPSTNAKRSWREVGSGSNLEPGTSDLSSPRNFSPLTDDHLFQADRENSDSSNPENQNMNTRHRKKWNVLETQSETSETESDIAKHTKEQAEYKDMWEKTDNSRNLKATPTEHLFTCRETECYGLSSLADHGITEKAQAVTAYIIKTTLESTPESASARGKAIIAKLPQETAGNDRPIEVKETAFDPHEGRKDDSHYSLCHGDTAGVIHDNDFERESHLDICNLRVDEMKKEKTTSTCFPQKTYDKEKHGIGSVTSIDEPSQVITGNQKATSKLDLHLGVLPTDRAIFQANADLELLQELSRRTDFNAVPSAFNSDTASASRDSSQVYRHCSKKSVPSYGEEKAVTNTTLQSIPTKSEYNWHPESEVLGHAMSKPEDVFKSSEIMKSGSGGERGGGPILQQKEGSLENSQGPMFFTNEPLENLDEASSENEGLMHSGQSQCYLGDKGLVSSASATVSTQELEAQGRESLLSISTNSKIPYFLLFLIFLATVYYYDLMIGLAFYLFSLYWLYWEGGRQRESVKKK.

Residues Lys32–Asp57 are disordered. Residues Pro37 to Ser51 show a composition bias toward low complexity. Phosphoserine; by GSK3 is present on residues Ser40 and Ser44. Ser48 and Ser51 each carry phosphoserine. Phosphothreonine is present on Thr58. Positions Arg64–Ser67 match the PP1-binding motif motif. The residue at position 67 (Ser67) is a Phosphoserine; by PKA. The CBM21 domain occupies Glu123–Val231. Disordered regions lie at residues Phe385 to Ser420, His479 to Asn501, and Pro566 to Ala649. The span at Ser581–Pro600 shows a compositional bias: polar residues. A compositionally biased stretch (basic and acidic residues) spans Thr602 to Ser614. Residues Asp615–Asn625 show a composition bias toward polar residues. The residue at position 821 (Ser821) is a Phosphoserine. The tract at residues Ile949–Glu968 is disordered. Over residues Gly953 to Pro962 the composition is skewed to gly residues. The helical transmembrane segment at Leu1047–Phe1067 threads the bilayer.

Interacts with PPP1CC catalytic subunit of PP1, and associates with glycogen. Post-translationally, phosphorylation at Ser-48 by ISPK stimulates the dephosphorylation of glycogen synthase and phosphorylase kinase. As to expression, skeletal muscle and heart.

It localises to the membrane. In terms of biological role, seems to act as a glycogen-targeting subunit for PP1. PP1 is essential for cell division, and participates in the regulation of glycogen metabolism, muscle contractility and protein synthesis. Plays an important role in glycogen synthesis but is not essential for insulin activation of glycogen synthase. This Mus musculus (Mouse) protein is Protein phosphatase 1 regulatory subunit 3A (Ppp1r3a).